We begin with the raw amino-acid sequence, 643 residues long: Phosphomethylpyrimidine synthase (643 aa).

Substrate contacts are provided by residues asparagine 248, methionine 277, tyrosine 306, histidine 342, 362-364 (SRG), 403-406 (DGLR), and glutamate 442. Histidine 446 contacts Zn(2+). Tyrosine 469 serves as a coordination point for substrate. Residue histidine 510 coordinates Zn(2+). [4Fe-4S] cluster-binding residues include cysteine 590, cysteine 593, and cysteine 598.

This sequence belongs to the ThiC family. Homodimer. [4Fe-4S] cluster is required as a cofactor.

It catalyses the reaction 5-amino-1-(5-phospho-beta-D-ribosyl)imidazole + S-adenosyl-L-methionine = 4-amino-2-methyl-5-(phosphooxymethyl)pyrimidine + CO + 5'-deoxyadenosine + formate + L-methionine + 3 H(+). It functions in the pathway cofactor biosynthesis; thiamine diphosphate biosynthesis. Functionally, catalyzes the synthesis of the hydroxymethylpyrimidine phosphate (HMP-P) moiety of thiamine from aminoimidazole ribotide (AIR) in a radical S-adenosyl-L-methionine (SAM)-dependent reaction. This chain is Phosphomethylpyrimidine synthase, found in Paraburkholderia phymatum (strain DSM 17167 / CIP 108236 / LMG 21445 / STM815) (Burkholderia phymatum).